Consider the following 266-residue polypeptide: Ribosomal RNA small subunit methyltransferase A (266 aa).

Residues Asn-11, Leu-13, Gly-37, Glu-57, Asp-85, and Asn-104 each coordinate S-adenosyl-L-methionine.

This sequence belongs to the class I-like SAM-binding methyltransferase superfamily. rRNA adenine N(6)-methyltransferase family. RsmA subfamily.

It localises to the cytoplasm. It catalyses the reaction adenosine(1518)/adenosine(1519) in 16S rRNA + 4 S-adenosyl-L-methionine = N(6)-dimethyladenosine(1518)/N(6)-dimethyladenosine(1519) in 16S rRNA + 4 S-adenosyl-L-homocysteine + 4 H(+). Its function is as follows. Specifically dimethylates two adjacent adenosines (A1518 and A1519) in the loop of a conserved hairpin near the 3'-end of 16S rRNA in the 30S particle. May play a critical role in biogenesis of 30S subunits. The protein is Ribosomal RNA small subunit methyltransferase A of Campylobacter jejuni (strain RM1221).